A 254-amino-acid polypeptide reads, in one-letter code: RNA polymerase sigma factor SigI8 (254 aa).

Positions 61–74 (DEYSIALIAFNEAI) match the Polymerase core binding motif. Positions 209 to 228 (YKELTERFNLCRRTLEKNRK) form a DNA-binding region, H-T-H motif.

It belongs to the sigma-70 factor family. SigI subfamily. As to quaternary structure, interacts with RsgI8.

It is found in the cytoplasm. Its activity is regulated as follows. Negatively regulated by the anti-sigma-I factor RsgI8. In terms of biological role, sigma factors are initiation factors that promote the attachment of RNA polymerase to specific initiation sites and are then released. This is RNA polymerase sigma factor SigI8 from Acetivibrio thermocellus (strain ATCC 27405 / DSM 1237 / JCM 9322 / NBRC 103400 / NCIMB 10682 / NRRL B-4536 / VPI 7372) (Clostridium thermocellum).